Reading from the N-terminus, the 102-residue chain is Small ribosomal subunit protein bS18 (102 aa).

It belongs to the bacterial ribosomal protein bS18 family. Part of the 30S ribosomal subunit. Forms a tight heterodimer with protein bS6.

Functionally, binds as a heterodimer with protein bS6 to the central domain of the 16S rRNA, where it helps stabilize the platform of the 30S subunit. The polypeptide is Small ribosomal subunit protein bS18 (Orientia tsutsugamushi (strain Ikeda) (Rickettsia tsutsugamushi)).